Consider the following 60-residue polypeptide: Large ribosomal subunit protein uL30 (60 aa).

It belongs to the universal ribosomal protein uL30 family. In terms of assembly, part of the 50S ribosomal subunit.

The protein is Large ribosomal subunit protein uL30 of Kineococcus radiotolerans (strain ATCC BAA-149 / DSM 14245 / SRS30216).